A 176-amino-acid chain; its full sequence is NAD(P)H-quinone oxidoreductase subunit 6, chloroplastic (176 aa).

Transmembrane regions (helical) follow at residues 10–30 (FLLV…VLLP), 32–52 (PIFS…LYIL), 61–81 (AQLL…VMFM), 92–112 (LWTV…FSLM), and 152–172 (FFLP…GAIS).

It belongs to the complex I subunit 6 family. NDH is composed of at least 16 different subunits, 5 of which are encoded in the nucleus.

It localises to the plastid. Its subcellular location is the chloroplast thylakoid membrane. It catalyses the reaction a plastoquinone + NADH + (n+1) H(+)(in) = a plastoquinol + NAD(+) + n H(+)(out). It carries out the reaction a plastoquinone + NADPH + (n+1) H(+)(in) = a plastoquinol + NADP(+) + n H(+)(out). Its function is as follows. NDH shuttles electrons from NAD(P)H:plastoquinone, via FMN and iron-sulfur (Fe-S) centers, to quinones in the photosynthetic chain and possibly in a chloroplast respiratory chain. The immediate electron acceptor for the enzyme in this species is believed to be plastoquinone. Couples the redox reaction to proton translocation, and thus conserves the redox energy in a proton gradient. This Nasturtium officinale (Watercress) protein is NAD(P)H-quinone oxidoreductase subunit 6, chloroplastic (ndhG).